Here is an 862-residue protein sequence, read N- to C-terminus: Cytosolic carboxypeptidase 2 (862 aa).

In terms of domain architecture, Peptidase M14 spans 359 to 629 (YPYTYTDLQC…HVCDTLLDFC (271 aa)). His425, Glu428, and His521 together coordinate Zn(2+). Glu593 acts as the Proton donor/acceptor in catalysis. Disordered stretches follow at residues 669 to 692 (SDIP…DGPP), 704 to 728 (NQKT…EQYQ), and 750 to 836 (STLQ…PNWS). The span at 674-689 (SDIESSTSGSDSSLSD) shows a compositional bias: low complexity. Over residues 711–721 (NPKKKRLQTRK) the composition is skewed to basic residues. The segment covering 813–825 (ASCSPKRSTNSSL) has biased composition (polar residues).

It belongs to the peptidase M14 family. Interacts with RARRES1, KIF11 and MAPRE1. Zn(2+) is required as a cofactor. In terms of tissue distribution, widely expressed. Expressed in tissues with motile cilia such as testis, lung and trachea. Also detected in brain, eye, muscle, pancreas, intestine, stomach, pituitary, spleen, adrenal and kidney. Expressed in mitral and granular cells in brain.

It localises to the cytoplasm. The protein localises to the cytosol. It is found in the cytoskeleton. Its subcellular location is the microtubule organizing center. The protein resides in the centrosome. It localises to the centriole. The protein localises to the cilium basal body. It carries out the reaction (L-glutamyl)(n+1)-gamma-L-glutamyl-L-glutamyl-[protein] + H2O = (L-glutamyl)(n)-gamma-L-glutamyl-L-glutamyl-[protein] + L-glutamate. Its activity is regulated as follows. Inhibited by RARRES1. In terms of biological role, metallocarboxypeptidase that mediates deglutamylation of tubulin and non-tubulin target proteins. Catalyzes the removal of polyglutamate side chains present on the gamma-carboxyl group of glutamate residues within the C-terminal tail of tubulin protein. Specifically cleaves tubulin long-side-chains, while it is not able to remove the branching point glutamate. Also catalyzes the removal of polyglutamate residues from the carboxy-terminus of non-tubulin proteins such as MYLK. The sequence is that of Cytosolic carboxypeptidase 2 from Mus musculus (Mouse).